We begin with the raw amino-acid sequence, 412 residues long: Mitochondrial distribution and morphology protein 12 (412 aa).

Residues Met1–Gly410 form the SMP-LTD domain. Disordered stretches follow at residues Glu66 to Glu96, Tyr108 to Asp136, Gln166 to Asn238, and Pro314 to Pro354. Residues Asn220 to Asn238 are compositionally biased toward low complexity.

Belongs to the MDM12 family. Component of the ER-mitochondria encounter structure (ERMES) or MDM complex, composed of MMM1, MDM10, MDM12 and MDM34. An MMM1 homodimer associates with one molecule of MDM12 on each side in a pairwise head-to-tail manner, and the SMP-LTD domains of MMM1 and MDM12 generate a continuous hydrophobic tunnel for phospholipid trafficking.

It localises to the mitochondrion outer membrane. It is found in the endoplasmic reticulum membrane. Component of the ERMES/MDM complex, which serves as a molecular tether to connect the endoplasmic reticulum (ER) and mitochondria. Components of this complex are involved in the control of mitochondrial shape and protein biogenesis, and function in nonvesicular lipid trafficking between the ER and mitochondria. MDM12 is required for the interaction of the ER-resident membrane protein MMM1 and the outer mitochondrial membrane-resident beta-barrel protein MDM10. The MDM12-MMM1 subcomplex functions in the major beta-barrel assembly pathway that is responsible for biogenesis of all mitochondrial outer membrane beta-barrel proteins, and acts in a late step after the SAM complex. The MDM10-MDM12-MMM1 subcomplex further acts in the TOM40-specific pathway after the action of the MDM12-MMM1 complex. Essential for establishing and maintaining the structure of mitochondria and maintenance of mtDNA nucleoids. The protein is Mitochondrial distribution and morphology protein 12 of Coprinopsis cinerea (strain Okayama-7 / 130 / ATCC MYA-4618 / FGSC 9003) (Inky cap fungus).